The primary structure comprises 366 residues: Putative [LysW]-aminoadipate semialdehyde/glutamate semialdehyde transaminase (366 aa).

Pyridoxal 5'-phosphate is bound by residues 90–91 (GT) and phenylalanine 117. A substrate-binding site is contributed by arginine 120. 202-205 (DEVQ) lines the pyridoxal 5'-phosphate pocket. An N6-(pyridoxal phosphate)lysine modification is found at lysine 230. Serine 254 contributes to the substrate binding site. Residue threonine 255 coordinates pyridoxal 5'-phosphate.

This sequence belongs to the class-III pyridoxal-phosphate-dependent aminotransferase family. LysJ subfamily. In terms of assembly, homodimer. The cofactor is pyridoxal 5'-phosphate.

It is found in the cytoplasm. It catalyses the reaction [amino-group carrier protein]-C-terminal-gamma-(L-lysyl)-L-glutamate + 2-oxoglutarate = [amino-group carrier protein]-C-terminal-N-(1-carboxy-5-oxopentan-1-yl)-L-glutamine + L-glutamate. It carries out the reaction [amino-group carrier protein]-C-terminal-gamma-(L-ornithyl)-L-glutamate + 2-oxoglutarate = [amino-group carrier protein]-C-terminal-gamma-(L-glutamyl-5-semialdehyde)-L-glutamate + L-glutamate. It functions in the pathway amino-acid biosynthesis; L-lysine biosynthesis via AAA pathway; L-lysine from L-alpha-aminoadipate (Thermus route): step 4/5. It participates in amino-acid biosynthesis; L-arginine biosynthesis. Involved in both the arginine and lysine biosynthetic pathways. In Pyrococcus horikoshii (strain ATCC 700860 / DSM 12428 / JCM 9974 / NBRC 100139 / OT-3), this protein is Putative [LysW]-aminoadipate semialdehyde/glutamate semialdehyde transaminase.